A 48-amino-acid polypeptide reads, in one-letter code: uncharacterized protein (48 aa).

The protein belongs to the ELIP/psbS family.

Its subcellular location is the plastid. The protein resides in the chloroplast. Its function is as follows. Possible role in chlorophyll and/or carotenoid binding. This is an uncharacterized protein from Porphyra purpurea (Red seaweed).